Consider the following 775-residue polypeptide: Thiamine repressible genes regulatory protein thi1 (775 aa).

Positions 39-65 (CKHCRQKKIKCNGGQPCISCKTLNIEC) form a DNA-binding region, zn(2)-C6 fungal-type. Ser208 is subject to Phosphoserine. 2 disordered regions span residues 676 to 695 (LTGESSNGSNSTPNEAFQPF) and 754 to 775 (NVSEQSSHTAEQTSNLTLEKNG).

The protein localises to the nucleus. Functionally, transcription factor that activates the nmt1 promoter. Regulation of thiamine repressible genes. Positively regulates conjugation during meiosis. The chain is Thiamine repressible genes regulatory protein thi1 (thi1) from Schizosaccharomyces pombe (strain 972 / ATCC 24843) (Fission yeast).